A 401-amino-acid polypeptide reads, in one-letter code: 1-deoxy-D-xylulose 5-phosphate reductoisomerase (401 aa).

Residues Thr-10, Gly-11, Ser-12, Ile-13, Asn-38, and Asn-124 each contribute to the NADPH site. Lys-125 serves as a coordination point for 1-deoxy-D-xylulose 5-phosphate. An NADPH-binding site is contributed by Glu-126. A Mn(2+)-binding site is contributed by Asp-150. 4 residues coordinate 1-deoxy-D-xylulose 5-phosphate: Ser-151, Glu-152, Ser-186, and His-209. Glu-152 is a Mn(2+) binding site. An NADPH-binding site is contributed by Gly-215. 4 residues coordinate 1-deoxy-D-xylulose 5-phosphate: Ser-222, Asn-227, Lys-228, and Glu-231. Glu-231 contacts Mn(2+).

It belongs to the DXR family. Requires Mg(2+) as cofactor. Mn(2+) is required as a cofactor.

The enzyme catalyses 2-C-methyl-D-erythritol 4-phosphate + NADP(+) = 1-deoxy-D-xylulose 5-phosphate + NADPH + H(+). The protein operates within isoprenoid biosynthesis; isopentenyl diphosphate biosynthesis via DXP pathway; isopentenyl diphosphate from 1-deoxy-D-xylulose 5-phosphate: step 1/6. Its function is as follows. Catalyzes the NADPH-dependent rearrangement and reduction of 1-deoxy-D-xylulose-5-phosphate (DXP) to 2-C-methyl-D-erythritol 4-phosphate (MEP). The sequence is that of 1-deoxy-D-xylulose 5-phosphate reductoisomerase from Vibrio campbellii (strain ATCC BAA-1116).